The primary structure comprises 551 residues: DNA ligase (551 aa).

E246 serves as a coordination point for ATP. K248 serves as the catalytic N6-AMP-lysine intermediate. ATP contacts are provided by R253, R268, E298, F337, R414, and K420.

Belongs to the ATP-dependent DNA ligase family. The cofactor is Mg(2+).

It catalyses the reaction ATP + (deoxyribonucleotide)n-3'-hydroxyl + 5'-phospho-(deoxyribonucleotide)m = (deoxyribonucleotide)n+m + AMP + diphosphate.. DNA ligase that seals nicks in double-stranded DNA during DNA replication, DNA recombination and DNA repair. The polypeptide is DNA ligase (Methanobrevibacter smithii (strain ATCC 35061 / DSM 861 / OCM 144 / PS)).